Reading from the N-terminus, the 200-residue chain is Phospholipase A2 inhibitor LNF1 (200 aa).

The N-terminal stretch at 1-19 (MKYLHTICLLFIFVARGNS) is a signal peptide. Intrachain disulfides connect cysteine 22-cysteine 46, cysteine 25-cysteine 32, cysteine 39-cysteine 67, cysteine 73-cysteine 94, cysteine 95-cysteine 100, cysteine 118-cysteine 143, cysteine 136-cysteine 165, and cysteine 169-cysteine 191. An N-linked (GlcNAc...) asparagine glycan is attached at asparagine 176.

This sequence belongs to the CNF-like-inhibitor family. In terms of assembly, occurs as a mixture of oligomers. Tetrameric arrangement appears to be the predominant quaternary structure. Expressed by the liver.

The protein resides in the secreted. Inhibits the enzymatic activity of phospholipase A2 (PA2). This Lachesis muta muta (Bushmaster) protein is Phospholipase A2 inhibitor LNF1.